The chain runs to 88 residues: Small ribosomal subunit protein bS20 (88 aa).

2 disordered regions span residues Met1 to Ala23 and Pro69 to Ala88. The span at Pro69–Thr81 shows a compositional bias: basic residues.

This sequence belongs to the bacterial ribosomal protein bS20 family.

In terms of biological role, binds directly to 16S ribosomal RNA. In Alcanivorax borkumensis (strain ATCC 700651 / DSM 11573 / NCIMB 13689 / SK2), this protein is Small ribosomal subunit protein bS20.